We begin with the raw amino-acid sequence, 199 residues long: Protein PPP1R35 homolog (199 aa).

Over residues 1 to 11 the composition is skewed to basic residues; sequence MPHKRRNRVHA. 2 disordered regions span residues 1–23 and 36–60; these read MPHKRRNRVHANQRNFTARRVSV and ESCNGSHADNSSPDSPKAKEGAMTN. Residues 38 to 49 show a composition bias toward polar residues; that stretch reads CNGSHADNSSPD.

Belongs to the PPP1R35 family. Interacts with Ana3; this complex is recruited to daughter centrioles before their conversion to centrosomes.

It localises to the cytoplasm. Its subcellular location is the cytoskeleton. The protein localises to the microtubule organizing center. The protein resides in the centrosome. It is found in the centriole. Functionally, participates in the later stages of centriole assembly through the interaction with Ana3 leading to the centriole to centrosome conversion in somatic cells. The protein is Protein PPP1R35 homolog of Drosophila melanogaster (Fruit fly).